A 170-amino-acid chain; its full sequence is Siroheme decarboxylase NirL subunit (170 aa).

This sequence belongs to the Ahb/Nir family. Probably forms a complex composed of NirD, NirL, NirG and NirH. All proteins are required for the total conversion of siroheme to didecarboxysiroheme.

The enzyme catalyses siroheme + 2 H(+) = 12,18-didecarboxysiroheme + 2 CO2. It participates in porphyrin-containing compound metabolism. In terms of biological role, involved in heme d1 biosynthesis. Catalyzes the decarboxylation of siroheme into didecarboxysiroheme. This chain is Siroheme decarboxylase NirL subunit, found in Stutzerimonas stutzeri (Pseudomonas stutzeri).